Consider the following 382-residue polypeptide: MSSVEAVTQQQLLAAENPVRMGKGAADPRRAALGEITNRNAAAAANRKMGPSKKQPKPSCAQKPQPVVHTSAGDPAPISADMSMKVEQDLSQAFSEVLMLAVQDVDEQDADQPQLCSQYVKDIYKYLHTLEEQQAIRPNYMQGYSVTEHMRALLVDWLVQVHSRFQLLQETLYLTVAILDRFLQVHPVSRRKLQLVGVTAMLVACKYEEMYPPEVGDFAYITDDAFTKFQIVEMEQVILRSLGFQLGRPLPLHFLRRASKVADADVEKHTLAKYLLELTLLDYHMVHYRPSEAAAAALCLSQLLLDGLPWSLEQQHYSTYDEQHLKPIMQLMAKNVVQVTEGRTKFLAVKKKYSSSKLMKISLIPQLNSSTIKVMAEALQNP.

Residues 1 to 12 show a composition bias toward polar residues; it reads MSSVEAVTQQQL. The segment at 1-78 is disordered; that stretch reads MSSVEAVTQQ…HTSAGDPAPI (78 aa). The segment covering 38–47 has biased composition (low complexity); it reads NRNAAAAANR.

The protein belongs to the cyclin family. Cyclin AB subfamily. In terms of assembly, interacts with the CDK1 protein kinase to form a serine/threonine kinase holoenzyme complex also known as maturation promoting factor (MPF). The cyclin subunit imparts substrate specificity to the complex.

In terms of biological role, essential for the control of the cell cycle at the G2/M (mitosis) transition. This chain is G2/mitotic-specific cyclin-B2 (ccnb2), found in Oryzias javanicus (Javanese ricefish).